Consider the following 476-residue polypeptide: Angiotensinogen (476 aa).

An N-terminal signal peptide occupies residues 1–24; it reads MAPAGLSLGAAILCLLAWAGLAAG. A disulfide bond links Cys42 and Cys161. Residues Asn295, Asn319, Asn362, and Asn401 are each glycosylated (N-linked (GlcNAc...) asparagine).

It belongs to the serpin family. In terms of processing, in response to low blood pressure, the enzyme renin/REN cleaves angiotensinogen to produce angiotensin-1. Angiotensin-1 is a substrate of ACE (angiotensin converting enzyme) that removes a dipeptide to yield the physiologically active peptide angiotensin-2. Angiotensin-1 and angiotensin-2 can be further processed to generate angiotensin-3, angiotensin-4. Angiotensin 1-9 is cleaved from angiotensin-1 by ACE2 and can be further processed by ACE to produce angiotensin 1-7, angiotensin 1-5 and angiotensin 1-4. Angiotensin 1-7 has also been proposed to be cleaved from angiotensin-2 by ACE2 or from angiotensin-1 by MME (neprilysin). The disulfide bond is labile. Angiotensinogen is present in the circulation in a near 40:60 ratio with the oxidized disulfide-bonded form, which preferentially interacts with receptor-bound renin.

The protein localises to the secreted. Its function is as follows. Essential component of the renin-angiotensin system (RAS), a potent regulator of blood pressure, body fluid and electrolyte homeostasis. Acts directly on vascular smooth muscle as a potent vasoconstrictor, affects cardiac contractility and heart rate through its action on the sympathetic nervous system, and alters renal sodium and water absorption through its ability to stimulate the zona glomerulosa cells of the adrenal cortex to synthesize and secrete aldosterone. Acts by binding to angiotensin receptors AGTR1 and AGTR2. Also binds the DEAR/FBXW7-AS1 receptor. Functionally, stimulates aldosterone release. In terms of biological role, is a ligand for the G-protein coupled receptor MAS1. Has vasodilator and antidiuretic effects. Has an antithrombotic effect that involves MAS1-mediated release of nitric oxide from platelets. The chain is Angiotensinogen (AGT) from Bos taurus (Bovine).